A 1387-amino-acid polypeptide reads, in one-letter code: DNA-directed RNA polymerase subunit beta' (1387 aa).

4 residues coordinate Zn(2+): Cys-70, Cys-72, Cys-85, and Cys-88. Positions 461, 463, and 465 each coordinate Mg(2+). Zn(2+)-binding residues include Cys-808, Cys-882, Cys-889, and Cys-892. Residues 1367-1387 are disordered; it reads QDEAKGVGQETPRLSGQEAAE.

The protein belongs to the RNA polymerase beta' chain family. As to quaternary structure, the RNAP catalytic core consists of 2 alpha, 1 beta, 1 beta' and 1 omega subunit. When a sigma factor is associated with the core the holoenzyme is formed, which can initiate transcription. Mg(2+) is required as a cofactor. It depends on Zn(2+) as a cofactor.

The catalysed reaction is RNA(n) + a ribonucleoside 5'-triphosphate = RNA(n+1) + diphosphate. Functionally, DNA-dependent RNA polymerase catalyzes the transcription of DNA into RNA using the four ribonucleoside triphosphates as substrates. The chain is DNA-directed RNA polymerase subunit beta' from Granulibacter bethesdensis (strain ATCC BAA-1260 / CGDNIH1).